The following is an 816-amino-acid chain: Phosphatidylinositol 4-kinase beta (816 aa).

3 disordered regions span residues 1–29, 99–121, and 250–318; these read MGDM…GGSL, EEED…RRRQ, and RKRE…SFSS. Glycine 2 is subject to N-acetylglycine. An interaction with ACBD3 region spans residues 2-68; that stretch reads GDMVVEPATL…VKLLHGGVAI (67 aa). Over residues 10 to 29 the composition is skewed to low complexity; the sequence is TLKPTSEPTPSPSGNNGGSL. Positions 61–242 constitute a PIK helical domain; sequence LLHGGVAISS…GTKLRKLILS (182 aa). A Phosphoserine modification is found at serine 258. Phosphothreonine is present on threonine 263. Phosphoserine occurs at positions 266, 275, 277, 284, and 294. Composition is skewed to polar residues over residues 278–297 and 306–318; these read DATA…SNPK and SSST…SFSS. Residue serine 428 is modified to Phosphoserine. The residue at position 438 (threonine 438) is a Phosphothreonine. Position 511 is a phosphoserine (serine 511). Phosphothreonine occurs at positions 517 and 519. The region spanning 535–801 is the PI3K/PI4K catalytic domain; sequence EPWQEKVRRI…MVDGSMRSIT (267 aa). The segment at 541 to 547 is G-loop; it reads VRRIREG. The tract at residues 668 to 676 is catalytic loop; the sequence is QVKDRHNGN. An activation loop region spans residues 687-711; the sequence is HIDFGFILSSSPRNLGFETSAFKLT.

Belongs to the PI3/PI4-kinase family. Type III PI4K subfamily. As to quaternary structure, interacts with ARF1 and ARF3 in the Golgi complex, but not with ARF4, ARF5 or ARF6. Interacts with NCS1/FREQ in a calcium-independent manner. Interacts with CALN1/CABP8 and CALN2/CABP7; in a calcium-dependent manner; this interaction competes with NCS1/FREQ binding. Interacts with ACBD3. Interacts with ARMH3, YWHAB, YWHAE, YWHAG, YWHAH, YWHAQ, YWHAZ and SFN. Interacts with GGA2 (via VHS domain); the interaction is important for PI4KB location at the Golgi apparatus membrane. Interacts with ATG9A. Requires Mg(2+) as cofactor. Mn(2+) is required as a cofactor. Strongly expressed in brain, kidney, lung, small intestine, uterus and adrenal gland. Weaker expression in liver, heart, skeletal muscle, thymus and testis. Not detected in spleen.

The protein localises to the golgi apparatus. Its subcellular location is the endomembrane system. It localises to the mitochondrion outer membrane. The protein resides in the rough endoplasmic reticulum membrane. It is found in the golgi apparatus membrane. It catalyses the reaction a 1,2-diacyl-sn-glycero-3-phospho-(1D-myo-inositol) + ATP = a 1,2-diacyl-sn-glycero-3-phospho-(1D-myo-inositol 4-phosphate) + ADP + H(+). Inhibited by wortmannin. Increased kinase activity upon interaction with NCS1/FREQ. Phosphorylates phosphatidylinositol (PI) in the first committed step in the production of the second messenger inositol-1,4,5,-trisphosphate (PIP). May regulate Golgi disintegration/reorganization during mitosis, possibly via its phosphorylation. Involved in Golgi-to-plasma membrane trafficking. May play an important role in the inner ear development. The polypeptide is Phosphatidylinositol 4-kinase beta (Pi4kb) (Rattus norvegicus (Rat)).